The chain runs to 685 residues: Amino acid transporter heavy chain SLC3A1 (685 aa).

The segment covering 1–11 (MAEDKSKRDSI) has biased composition (basic and acidic residues). Residues 1–56 (MAEDKSKRDSIEMSMKGCQTNNGFVHNEDILEQTPDPGSSTDNLKHSTRGILGSQE) are disordered. At 1–87 (MAEDKSKRDS…GQARYRIPRE (87 aa)) the chain is on the cytoplasmic side. Position 10 is a phosphoserine (Ser-10). Residues 88–108 (ILFWLTVASVLVLIAATIAII) traverse the membrane as a helical; Signal-anchor for type II membrane protein segment. Over 109 to 685 (ALSPKCLDWW…SVLNILYTSC (577 aa)) the chain is Extracellular. Ca(2+) is bound at residue Asn-214. Asn-214 and Asn-261 each carry an N-linked (GlcNAc...) asparagine glycan. Cys-242 and Cys-273 are joined by a disulfide. Asp-284, Phe-318, Leu-319, and Glu-321 together coordinate Ca(2+). 4 N-linked (GlcNAc...) asparagine glycosylation sites follow: Asn-332, Asn-495, Asn-513, and Asn-575. 2 disulfide bridges follow: Cys-571-Cys-666 and Cys-673-Cys-685.

As to quaternary structure, disulfide-linked heterodimer composed of the catalytic light subunit SLC7A9 and the heavy subunit SLC3A1. The heterodimer is the minimal functional unit. Assembles in non-covalently linked heterotetramers (dimers of heterodimers) and higher order oligomers; the oligomerization is mediated by SLC3A1 likely to prevent degradation in the endoplasmic reticulum and facilitate heteromer trafficking to the plasma membrane. Disulfide-linked heterodimer composed of the catalytic light subunit SLC7A13 and the heavy subunit SLC3A1. Expressed in the brush border membrane in the kidney (at protein level). Predominantly expressed in the kidney, small intestine and pancreas. Weakly expressed in liver.

The protein localises to the cell membrane. The protein resides in the apical cell membrane. In terms of biological role, acts as a chaperone that facilitates biogenesis and trafficking of functional transporter heteromers to the plasma membrane. Associates with SLC7A9 to form a functional transporter complex that mediates the electrogenic exchange between cationic amino acids and neutral amino acids, with a stoichiometry of 1:1. SLC7A9-SLC3A1 transporter has system b(0,+)-like activity with high affinity for extracellular cationic amino acids and L-cystine and lower affinity for intracellular neutral amino acids. Substrate exchange is driven by high concentration of intracellular neutral amino acids and the intracellular reduction of L-cystine to L-cysteine. SLC7A9-SLC3A1 acts as a major transporter for reabsorption of L-cystine and dibasic amino acids across the brush border membrane in early proximal tubules. Associates with SLC7A13 to form a functional complex that transports anionic and neutral amino acids via exchange or facilitated diffusion. SLC7A13-SLC3A1 may act as a major transporter for L-cystine in late proximal tubules, ensuring its reabsorption from the luminal fluid in exchange for cytosolic L-glutamate or L-aspartate. This chain is Amino acid transporter heavy chain SLC3A1, found in Homo sapiens (Human).